A 370-amino-acid chain; its full sequence is MNERTSDAFDALLVLSFGGPEGHEEVRPFLENVTHGRGIPPERLDEVAVHYHHFGGISPINALNREIIANVEKELASRDHKLPVYFGNRNWKPFDNEAAEQMADDGVKNALVLATSAWGGYSGCRQYQEDIQGMIKHLESQGQSITFTKLRQFYDHPRFVSTMAQLVQDSYAKLPDELRDEARLVFTAHSIPLTADNAAGTPEDGSLYSTQVKEASALIAEAVGVSDFDVVWQSRSGSPHTPWLEPDIVDHAVELNEKGQKALVVCPVGFISDHMEVIWDLDSELMEEAEKRNMVVERVATVGPTDEFAALVVDLIEEAELKRVIERLGKLPARGSSVNGAPCGDGCCGTAKHKTARVNPNARSAAPAAN.

Fe-coproporphyrin III contacts are provided by Ser-58 and Tyr-127. Residues His-189 and Glu-276 each coordinate Fe(2+).

The protein belongs to the ferrochelatase family.

Its subcellular location is the cytoplasm. It catalyses the reaction Fe-coproporphyrin III + 2 H(+) = coproporphyrin III + Fe(2+). The protein operates within porphyrin-containing compound metabolism; protoheme biosynthesis. In terms of biological role, involved in coproporphyrin-dependent heme b biosynthesis. Catalyzes the insertion of ferrous iron into coproporphyrin III to form Fe-coproporphyrin III. The polypeptide is Coproporphyrin III ferrochelatase (Corynebacterium glutamicum (strain ATCC 13032 / DSM 20300 / JCM 1318 / BCRC 11384 / CCUG 27702 / LMG 3730 / NBRC 12168 / NCIMB 10025 / NRRL B-2784 / 534)).